A 128-amino-acid chain; its full sequence is Crossover junction endodeoxyribonuclease Hjc (128 aa).

Glu-10 is a binding site for Mg(2+). Ser-30 is an active-site residue. Positions 34 and 47 each coordinate Mg(2+).

This sequence belongs to the Holliday junction resolvase Hjc family. As to quaternary structure, homodimer. The cofactor is Mg(2+).

The enzyme catalyses Endonucleolytic cleavage at a junction such as a reciprocal single-stranded crossover between two homologous DNA duplexes (Holliday junction).. Functionally, a structure-specific endonuclease that resolves Holliday junction (HJ) intermediates during genetic recombination. Cleaves 4-way DNA junctions introducing paired nicks in opposing strands, leaving a 5'-terminal phosphate and a 3'-terminal hydroxyl group that are subsequently ligated to produce recombinant products. The protein is Crossover junction endodeoxyribonuclease Hjc of Thermococcus kodakarensis (strain ATCC BAA-918 / JCM 12380 / KOD1) (Pyrococcus kodakaraensis (strain KOD1)).